A 322-amino-acid chain; its full sequence is Quinolinate synthase (322 aa).

Iminosuccinate-binding residues include His37 and Ser54. Cys99 provides a ligand contact to [4Fe-4S] cluster. Iminosuccinate-binding positions include 125-127 (YIN) and Ser142. Cys185 contributes to the [4Fe-4S] cluster binding site. Residues 211–213 (HPE) and Thr228 each bind iminosuccinate. Cys278 contacts [4Fe-4S] cluster.

This sequence belongs to the quinolinate synthase family. Type 2 subfamily. The cofactor is [4Fe-4S] cluster.

It is found in the cytoplasm. It carries out the reaction iminosuccinate + dihydroxyacetone phosphate = quinolinate + phosphate + 2 H2O + H(+). It participates in cofactor biosynthesis; NAD(+) biosynthesis; quinolinate from iminoaspartate: step 1/1. In terms of biological role, catalyzes the condensation of iminoaspartate with dihydroxyacetone phosphate to form quinolinate. In Chlorobaculum parvum (strain DSM 263 / NCIMB 8327) (Chlorobium vibrioforme subsp. thiosulfatophilum), this protein is Quinolinate synthase.